The chain runs to 355 residues: Cyanide hydratase (355 aa).

The region spanning 6-286 (YKAAAVTSEP…GLLFVDIDLN (281 aa)) is the CN hydrolase domain. The active-site Proton acceptor is Glu-46. Lys-128 is an active-site residue. Cys-163 serves as the catalytic Nucleophile.

This sequence belongs to the carbon-nitrogen hydrolase superfamily. Nitrilase family. As to quaternary structure, oligomer of dimers, forming left-handed helical fibers.

It catalyses the reaction formamide = hydrogen cyanide + H2O. Its function is as follows. Catalyzes the hydration of cyanide to formamide. Degradation of cyanide may be important for plant pathogenic fungi in infection of cyanogenic plants. Also has low but significant nitrilase activity with acetonitrile, propionitrile and benzonitrile. In Gibberella baccata (Fusarium lateritium), this protein is Cyanide hydratase.